The sequence spans 712 residues: Matrix metalloproteinase-9 (712 aa).

The signal sequence occupies residues 1-19 (MSPLQPLVLALLVLACCSA). A propeptide spans 20 to 106 (VPRRRQPTVV…PRCGVPDVGR (87 aa)) (activation peptide). Asn-38 carries N-linked (GlcNAc...) asparagine glycosylation. Residues 97-104 (PRCGVPDV) carry the Cysteine switch motif. Cys-99 provides a ligand contact to Zn(2+). Asn-120 and Asn-127 each carry an N-linked (GlcNAc...) asparagine glycan. Residues Asp-131 and Asp-165 each coordinate Ca(2+). The Zn(2+) site is built by His-175 and Asp-177. Ca(2+) is bound by residues Asp-182, Gly-183, Asn-185, and Leu-187. Residue His-190 participates in Zn(2+) binding. Gly-197, Gln-199, and Asp-201 together coordinate Ca(2+). His-203 contributes to the Zn(2+) binding site. Residues Asp-205, Asp-206, and Glu-208 each contribute to the Ca(2+) site. 3 Fibronectin type-II domains span residues 225-273 (AKGA…FCPS), 283-331 (ADGK…FCPT), and 342-390 (AAGE…FCPD). 6 cysteine pairs are disulfide-bonded: Cys-230/Cys-256, Cys-244/Cys-271, Cys-288/Cys-314, Cys-302/Cys-329, Cys-347/Cys-373, and Cys-361/Cys-388. Zn(2+) is bound at residue His-401. Glu-402 is an active-site residue. Residues His-405 and His-411 each coordinate Zn(2+). The interval 440–519 (QHLYGPRPEP…PTESPDPAED (80 aa)) is disordered. A compositionally biased stretch (low complexity) spans 455 to 465 (TTTTTTTTEPQ). Positions 491–504 (TGPPAAGPTGPPTA) are enriched in pro residues. Residues 505-514 (GPSAAPTESP) are compositionally biased toward low complexity. The cysteines at positions 521 and 709 are disulfide-linked. 4 Hemopexin repeats span residues 523-568 (VDIF…WPAL), 569-613 (PRKL…GLGP), 615-662 (VAQV…FPGV), and 663-709 (PIST…LLKC).

Belongs to the peptidase M10A family. As to quaternary structure, exists as monomer or homodimer; disulfide-linked. Also exists as heterodimer with LCN2. Macrophages and transformed cell lines produce only the monomeric form. Interacts with ECM1. The cofactor is Zn(2+). It depends on Ca(2+) as a cofactor. N- and O-glycosylated.

The protein resides in the secreted. It is found in the extracellular space. Its subcellular location is the extracellular matrix. It catalyses the reaction Cleavage of gelatin types I and V and collagen types IV and V.. Its function is as follows. Matrix metalloproteinase that plays an essential role in local proteolysis of the extracellular matrix and in leukocyte migration. Could play a role in bone osteoclastic resorption. Cleaves KiSS1 at a Gly-|-Leu bond. Cleaves NINJ1 to generate the Secreted ninjurin-1 form. Cleaves type IV and type V collagen into large C-terminal three quarter fragments and shorter N-terminal one quarter fragments. Degrades fibronectin but not laminin or Pz-peptide. The chain is Matrix metalloproteinase-9 from Bos taurus (Bovine).